A 72-amino-acid chain; its full sequence is Dermaseptin-A4 (72 aa).

A signal peptide spans 1-22 (MAFLKKSLFLVLFLGMVSLSIC). A propeptide spanning residues 23-41 (EEEKREEENEQEDDEQSEE) is cleaved from the precursor. The interval 24–43 (EEKREEENEQEDDEQSEEKR) is disordered. Residues 30–39 (ENEQEDDEQS) show a composition bias toward acidic residues. Residue alanine 69 is modified to Alanine amide. Residues 71–72 (EQ) constitute a propeptide that is removed on maturation.

Belongs to the frog skin active peptide (FSAP) family. Dermaseptin subfamily. Expressed by the skin glands.

The protein localises to the secreted. Possesses a potent antimicrobial activity against Gram-positive and Gram-negative bacteria. Probably acts by disturbing membrane functions with its amphipathic structure. The chain is Dermaseptin-A4 from Agalychnis annae (Blue-sided leaf frog).